The sequence spans 615 residues: Increased rDNA silencing protein 4 (615 aa).

Disordered stretches follow at residues 38–135 (SNEV…SSHS), 152–260 (LLGI…NRSQ), 277–304 (PSIA…NYSS), and 323–445 (KPKH…NEDK). Positions 50-65 (VSRNPQTRLSEPSLQK) are enriched in polar residues. Low complexity-rich tracts occupy residues 121–135 (HSQS…SSHS) and 157–168 (SRSSSRNGSNES). Serine 180 bears the Phosphoserine mark. Low complexity predominate over residues 184–198 (LLTSFSSGRRLSSSS). Residues 248–260 (NPDTSDVISNRSQ) are compositionally biased toward polar residues. Residues 281 to 290 (SSNTTTTTSN) show a composition bias toward low complexity. Residues 365-377 (ENDHASSLHEGNL) are compositionally biased toward basic and acidic residues. Over residues 389–402 (DVYDDTDSDSESDQ) the composition is skewed to acidic residues. Residues 409–438 (KPRKRDRIKRKIRNSANKTAHHRPIHRTRD) show a composition bias toward basic residues. An EH domain is found at 460–571 (ERKRYESMWV…QCVWDSVDRY (112 aa)).

Belongs to the IRS4 family. Interacts with INP51.

In terms of biological role, with TAX4, acts as a positive regulator of INP51 activity and phosphatidylinositol 4,5-bisphosphate turnover. Negatively regulates signaling through the cell integrity pathway, including the MAP kinase SLT2. Also seems to be involved in rDNA silencing. In Saccharomyces cerevisiae (strain ATCC 204508 / S288c) (Baker's yeast), this protein is Increased rDNA silencing protein 4 (IRS4).